The sequence spans 185 residues: Peptidyl-tRNA hydrolase (185 aa).

Tyrosine 14 provides a ligand contact to tRNA. The Proton acceptor role is filled by histidine 19. 3 residues coordinate tRNA: tyrosine 64, asparagine 66, and asparagine 112.

It belongs to the PTH family. Monomer.

The protein localises to the cytoplasm. It carries out the reaction an N-acyl-L-alpha-aminoacyl-tRNA + H2O = an N-acyl-L-amino acid + a tRNA + H(+). Its function is as follows. Hydrolyzes ribosome-free peptidyl-tRNAs (with 1 or more amino acids incorporated), which drop off the ribosome during protein synthesis, or as a result of ribosome stalling. Functionally, catalyzes the release of premature peptidyl moieties from peptidyl-tRNA molecules trapped in stalled 50S ribosomal subunits, and thus maintains levels of free tRNAs and 50S ribosomes. In Lactiplantibacillus plantarum (strain ATCC BAA-793 / NCIMB 8826 / WCFS1) (Lactobacillus plantarum), this protein is Peptidyl-tRNA hydrolase.